A 287-amino-acid chain; its full sequence is Large ribosomal subunit protein uL2 (287 aa).

The tract at residues 221 to 287 is disordered; that stretch reads RGSVMNPCDH…SKRSRGGRDS (67 aa). The span at 258–287 shows a compositional bias: basic residues; sequence KTRKRNKPSNKFVLRKRRKTSKRSRGGRDS.

This sequence belongs to the universal ribosomal protein uL2 family. As to quaternary structure, part of the 50S ribosomal subunit. Forms a bridge to the 30S subunit in the 70S ribosome.

In terms of biological role, one of the primary rRNA binding proteins. Required for association of the 30S and 50S subunits to form the 70S ribosome, for tRNA binding and peptide bond formation. It has been suggested to have peptidyltransferase activity; this is somewhat controversial. Makes several contacts with the 16S rRNA in the 70S ribosome. This is Large ribosomal subunit protein uL2 from Synechococcus sp. (strain WH7803).